We begin with the raw amino-acid sequence, 311 residues long: Cytosolic Fe-S cluster assembly factor Nubp1 homolog (311 aa).

[4Fe-4S] cluster is bound by residues Cys-9, Cys-23, Cys-26, and Cys-32. Position 63 to 70 (63 to 70 (GKGGVGKS)) interacts with ATP. [4Fe-4S] cluster-binding residues include Cys-241 and Cys-244.

Belongs to the Mrp/NBP35 ATP-binding proteins family. NUBP1/NBP35 subfamily. In terms of assembly, heterotetramer of 2 Nubp1 and 2 Nubp2 chains. It depends on [4Fe-4S] cluster as a cofactor.

It localises to the cytoplasm. Component of the cytosolic iron-sulfur (Fe/S) protein assembly (CIA) machinery. Required for maturation of extramitochondrial Fe-S proteins. The Nubp1-Nubp2 heterotetramer forms a Fe-S scaffold complex, mediating the de novo assembly of an Fe-S cluster and its transfer to target apoproteins. This Drosophila grimshawi (Hawaiian fruit fly) protein is Cytosolic Fe-S cluster assembly factor Nubp1 homolog.